We begin with the raw amino-acid sequence, 289 residues long: Right origin-binding protein (289 aa).

The 99-residue stretch at 8-106 folds into the HTH araC/xylS-type domain; sequence RDLLIWLEGH…AQTPALYRRS (99 aa). DNA-binding regions (H-T-H motif) lie at residues 25-46 and 73-96; these read DNVA…KDVT and ILDI…KKQF.

Transcriptional regulator. Binds to the right arm of the replication origin oriC of the chromosome. Rob binding may influence the formation of the nucleoprotein structure, required for oriC function in the initiation of replication. This chain is Right origin-binding protein (rob), found in Escherichia coli O157:H7.